Reading from the N-terminus, the 440-residue chain is Tol-Pal system protein TolB (440 aa).

The N-terminal stretch at 1–28 is a signal peptide; it reads MVMTRRIFFSWFIVICSLWLSSFSSVHA. Positions 417–440 are disordered; it reads RNERQLPTPNDASDPAWSPLLNMQ.

Belongs to the TolB family. As to quaternary structure, the Tol-Pal system is composed of five core proteins: the inner membrane proteins TolA, TolQ and TolR, the periplasmic protein TolB and the outer membrane protein Pal. They form a network linking the inner and outer membranes and the peptidoglycan layer.

The protein localises to the periplasm. Functionally, part of the Tol-Pal system, which plays a role in outer membrane invagination during cell division and is important for maintaining outer membrane integrity. This Bartonella quintana (strain Toulouse) (Rochalimaea quintana) protein is Tol-Pal system protein TolB.